The following is a 240-amino-acid chain: Phosphoribosylaminoimidazole-succinocarboxamide synthase (240 aa).

It belongs to the SAICAR synthetase family.

It carries out the reaction 5-amino-1-(5-phospho-D-ribosyl)imidazole-4-carboxylate + L-aspartate + ATP = (2S)-2-[5-amino-1-(5-phospho-beta-D-ribosyl)imidazole-4-carboxamido]succinate + ADP + phosphate + 2 H(+). The protein operates within purine metabolism; IMP biosynthesis via de novo pathway; 5-amino-1-(5-phospho-D-ribosyl)imidazole-4-carboxamide from 5-amino-1-(5-phospho-D-ribosyl)imidazole-4-carboxylate: step 1/2. This Wigglesworthia glossinidia brevipalpis protein is Phosphoribosylaminoimidazole-succinocarboxamide synthase.